The sequence spans 309 residues: 4-diphosphocytidyl-2-C-methyl-D-erythritol kinase (309 aa).

Residue lysine 28 is part of the active site. 120–130 is an ATP binding site; it reads PSQAGMGGGSS. Aspartate 162 is an active-site residue.

It belongs to the GHMP kinase family. IspE subfamily.

The enzyme catalyses 4-CDP-2-C-methyl-D-erythritol + ATP = 4-CDP-2-C-methyl-D-erythritol 2-phosphate + ADP + H(+). It functions in the pathway isoprenoid biosynthesis; isopentenyl diphosphate biosynthesis via DXP pathway; isopentenyl diphosphate from 1-deoxy-D-xylulose 5-phosphate: step 3/6. Functionally, catalyzes the phosphorylation of the position 2 hydroxy group of 4-diphosphocytidyl-2C-methyl-D-erythritol. This Polaromonas sp. (strain JS666 / ATCC BAA-500) protein is 4-diphosphocytidyl-2-C-methyl-D-erythritol kinase.